Reading from the N-terminus, the 432-residue chain is Histidine--tRNA ligase (432 aa).

It belongs to the class-II aminoacyl-tRNA synthetase family. In terms of assembly, homodimer.

It localises to the cytoplasm. The catalysed reaction is tRNA(His) + L-histidine + ATP = L-histidyl-tRNA(His) + AMP + diphosphate + H(+). In Symbiobacterium thermophilum (strain DSM 24528 / JCM 14929 / IAM 14863 / T), this protein is Histidine--tRNA ligase.